Reading from the N-terminus, the 45-residue chain is Large ribosomal subunit protein bL34 (45 aa).

The protein belongs to the bacterial ribosomal protein bL34 family.

This Prochlorococcus marinus (strain MIT 9313) protein is Large ribosomal subunit protein bL34.